The primary structure comprises 321 residues: Anthranilate phosphoribosyltransferase (321 aa).

Residues G72, 75–76 (GD), T80, 82–85 (NVST), 99–107 (KHGNVSITS), and S111 contribute to the 5-phospho-alpha-D-ribose 1-diphosphate site. Position 72 (G72) interacts with anthranilate. S84 contacts Mg(2+). N102 serves as a coordination point for anthranilate. R157 is an anthranilate binding site. 2 residues coordinate Mg(2+): D216 and E217.

This sequence belongs to the anthranilate phosphoribosyltransferase family. In terms of assembly, homodimer. It depends on Mg(2+) as a cofactor.

The catalysed reaction is N-(5-phospho-beta-D-ribosyl)anthranilate + diphosphate = 5-phospho-alpha-D-ribose 1-diphosphate + anthranilate. The protein operates within amino-acid biosynthesis; L-tryptophan biosynthesis; L-tryptophan from chorismate: step 2/5. Its function is as follows. Catalyzes the transfer of the phosphoribosyl group of 5-phosphorylribose-1-pyrophosphate (PRPP) to anthranilate to yield N-(5'-phosphoribosyl)-anthranilate (PRA). This is Anthranilate phosphoribosyltransferase from Methanococcus maripaludis (strain C6 / ATCC BAA-1332).